A 199-amino-acid chain; its full sequence is Replication protein (199 aa).

The protein belongs to the Gram-positive plasmids replication protein type 2 family.

Is essential for plasmid replication. Nicks the positive strand at the plus origin of replication. The chain is Replication protein (repF) from Staphylococcus aureus.